Reading from the N-terminus, the 274-residue chain is MLSVAARSGPFAPVLSATSRGVAGALRPLVQATVPATPEQPVLDLKRPFLSRESLSGQAVRRPLVASVGLNVPASVCYSHTDVKVPDFSEYRRLEVLDSTKSSRESSEARKGFSYLVTGVTTVGVAYAAKNAVTQFVSSMSASADVLALAKIEIKLSDIPEGKNMAFKWRGKPLFVRHRTQKEIEQEAAVELSQLRDPQHDLDRVKKPEWVILIGVCTHLGCVPIANAGDFGGYYCPCHGSHYDASGRIRLGPAPLNLEVPTYEFTSDDMVIVG.

The Mitochondrial matrix portion of the chain corresponds to 79-103; the sequence is SHTDVKVPDFSEYRRLEVLDSTKSS. The helical transmembrane segment at 104–140 threads the bilayer; sequence RESSEARKGFSYLVTGVTTVGVAYAAKNAVTQFVSSM. Over 141-274 the chain is Mitochondrial intermembrane; it reads SASADVLALA…FTSDDMVIVG (134 aa). The Rieske domain maps to 187–272; the sequence is EAAVELSQLR…YEFTSDDMVI (86 aa). 5 residues coordinate [2Fe-2S] cluster: Cys-217, His-219, Cys-236, His-239, and Ser-241. Cysteines 222 and 238 form a disulfide.

Belongs to the Rieske iron-sulfur protein family. Component of the ubiquinol-cytochrome c oxidoreductase (cytochrome b-c1 complex, complex III, CIII), a multisubunit enzyme composed of 11 subunits. The complex is composed of 3 respiratory subunits cytochrome b, cytochrome c1 and Rieske protein UQCRFS1, 2 core protein subunits UQCRC1/QCR1 and UQCRC2/QCR2, and 6 low-molecular weight protein subunits UQCRH/QCR6, UQCRB/QCR7, UQCRQ/QCR8, UQCR10/QCR9, UQCR11/QCR10 and subunit 9, the cleavage product of Rieske protein UQCRFS1. The complex exists as an obligatory dimer and forms supercomplexes (SCs) in the inner mitochondrial membrane with NADH-ubiquinone oxidoreductase (complex I, CI) and cytochrome c oxidase (complex IV, CIV), resulting in different assemblies (supercomplex SCI(1)III(2)IV(1) and megacomplex MCI(2)III(2)IV(2)). Incorporation of the Rieske protein UQCRFS1 is the penultimate step in complex III assembly. Interacts with TTC19, which is involved in the clearance of UQCRFS1 fragments. In terms of assembly, component of the ubiquinol-cytochrome c oxidoreductase (cytochrome b-c1 complex, complex III, CIII). Subunit 9 corresponds to the mitochondrial targeting sequence (MTS) of Rieske protein UQCRFS1. It is retained after processing and incorporated inside complex III, where it remains bound to the complex and localizes between the 2 core subunits UQCRC1/QCR1 and UQCRC2/QCR2. Requires [2Fe-2S] cluster as cofactor. Proteolytic processing is necessary for the correct insertion of UQCRFS1 in the complex III dimer. Several fragments are generated during UQCRFS1 insertion, most probably due to the endogenous matrix-processing peptidase (MPP) activity of the 2 core protein subunits UQCRC1/QCR1 and UQCRC2/QCR2, which are homologous to the 2 mitochondrial-processing peptidase (MPP) subunits beta-MPP and alpha-MPP respectively. The action of the protease is also necessary for the clearance of the UQCRFS1 fragments.

It localises to the mitochondrion inner membrane. It catalyses the reaction a quinol + 2 Fe(III)-[cytochrome c](out) = a quinone + 2 Fe(II)-[cytochrome c](out) + 2 H(+)(out). In terms of biological role, component of the ubiquinol-cytochrome c oxidoreductase, a multisubunit transmembrane complex that is part of the mitochondrial electron transport chain which drives oxidative phosphorylation. The respiratory chain contains 3 multisubunit complexes succinate dehydrogenase (complex II, CII), ubiquinol-cytochrome c oxidoreductase (cytochrome b-c1 complex, complex III, CIII) and cytochrome c oxidase (complex IV, CIV), that cooperate to transfer electrons derived from NADH and succinate to molecular oxygen, creating an electrochemical gradient over the inner membrane that drives transmembrane transport and the ATP synthase. The cytochrome b-c1 complex catalyzes electron transfer from ubiquinol to cytochrome c, linking this redox reaction to translocation of protons across the mitochondrial inner membrane, with protons being carried across the membrane as hydrogens on the quinol. In the process called Q cycle, 2 protons are consumed from the matrix, 4 protons are released into the intermembrane space and 2 electrons are passed to cytochrome c. The Rieske protein is a catalytic core subunit containing a [2Fe-2S] iron-sulfur cluster. It cycles between 2 conformational states during catalysis to transfer electrons from the quinol bound in the Q(0) site in cytochrome b to cytochrome c1. Incorporation of UQCRFS1 is the penultimate step in complex III assembly. Component of the ubiquinol-cytochrome c oxidoreductase (cytochrome b-c1 complex, complex III, CIII). UQCRFS1 undergoes proteolytic processing once it is incorporated in the complex III dimer. One of the fragments, called subunit 9, corresponds to its mitochondrial targeting sequence (MTS). The proteolytic processing is necessary for the correct insertion of UQCRFS1 in the complex III dimer, but the persistence of UQCRFS1-derived fragments may prevent newly imported UQCRFS1 to be processed and assembled into complex III and is detrimental for the complex III structure and function. The protein is Cytochrome b-c1 complex subunit Rieske, mitochondrial (UQCRFS1) of Pan paniscus (Pygmy chimpanzee).